The chain runs to 161 residues: Inner membrane assembly complex subunit 17 (161 aa).

Residues 1-22 (MLNPRPCVPRLLSAVARCHKPY) constitute a mitochondrion transit peptide. The Mitochondrial matrix portion of the chain corresponds to 23–84 (STSIKSLEDL…QQQQQALKKF (62 aa)). A helical transmembrane segment spans residues 85 to 107 (VRPMWIFLLMSSFFYLTGHYIWW). At 108–161 (KLEYDEREIELHKQVQALRQELDSAIAAKHSGKEPALSGAGAKKPKRWYLAWLW) the chain is on the mitochondrial intermembrane side. A coiled-coil region spans residues 109-138 (LEYDEREIELHKQVQALRQELDSAIAAKHS).

Belongs to the INA17 family. As to quaternary structure, component of the inner membrane assembly (INA) complex, composed of INA17 and INA22. Interacts with a subset of F(1)F(0)-ATP synthase subunits of the F(1)-domain and the peripheral stalk.

The protein localises to the mitochondrion inner membrane. Its function is as follows. Component of the INA complex (INAC) that promotes the biogenesis of mitochondrial F(1)F(0)-ATP synthase. INAC facilitates the assembly of the peripheral stalk and promotes the assembly of the catalytic F(1)-domain with the membrane-embedded F(0)-domain. The chain is Inner membrane assembly complex subunit 17 from Lachancea thermotolerans (strain ATCC 56472 / CBS 6340 / NRRL Y-8284) (Yeast).